Here is a 273-residue protein sequence, read N- to C-terminus: MSTSVTLNLHLISDSTCETVASVARSALEHFRSVEVNEFVWSFINNNEQIDKIMSLIEKDKYNFIMYTMFDDELRRYLKQKAGAQEIPCIPVLSHVIREISCYLHIKKDPYISTNIGLDDEYFTRIDAINYTIAHDDGQNLWDIDQADIIILGVSRTSKSPTSIYLAYRGYRVVNIPLVHSINLSVDLSNMKNKLIVGLTIDIDRLIEIRRTRLVSMKNQNNYQYVDYEHVLMEIKETKRICVQNGWPIIDVTQKSVEEIAATIIQYFNKMQH.

153 to 160 (GVSRTSKS) contributes to the ADP binding site.

Belongs to the pyruvate, phosphate/water dikinase regulatory protein family. PDRP subfamily.

It carries out the reaction N(tele)-phospho-L-histidyl/L-threonyl-[pyruvate, phosphate dikinase] + ADP = N(tele)-phospho-L-histidyl/O-phospho-L-threonyl-[pyruvate, phosphate dikinase] + AMP + H(+). The enzyme catalyses N(tele)-phospho-L-histidyl/O-phospho-L-threonyl-[pyruvate, phosphate dikinase] + phosphate + H(+) = N(tele)-phospho-L-histidyl/L-threonyl-[pyruvate, phosphate dikinase] + diphosphate. In terms of biological role, bifunctional serine/threonine kinase and phosphorylase involved in the regulation of the pyruvate, phosphate dikinase (PPDK) by catalyzing its phosphorylation/dephosphorylation. The protein is Putative pyruvate, phosphate dikinase regulatory protein of Ehrlichia chaffeensis (strain ATCC CRL-10679 / Arkansas).